The primary structure comprises 155 residues: Small ribosomal subunit protein uS7 (155 aa).

Belongs to the universal ribosomal protein uS7 family. In terms of assembly, part of the 30S ribosomal subunit. Contacts proteins S9 and S11.

In terms of biological role, one of the primary rRNA binding proteins, it binds directly to 16S rRNA where it nucleates assembly of the head domain of the 30S subunit. Is located at the subunit interface close to the decoding center, probably blocks exit of the E-site tRNA. This chain is Small ribosomal subunit protein uS7, found in Halorhodospira halophila (strain DSM 244 / SL1) (Ectothiorhodospira halophila (strain DSM 244 / SL1)).